Here is a 273-residue protein sequence, read N- to C-terminus: 4-hydroxy-tetrahydrodipicolinate reductase (273 aa).

Position 12 to 17 (Gly-12 to Met-17) interacts with NAD(+). Arg-39 is an NADP(+) binding site. NAD(+) contacts are provided by residues Gly-102–Thr-104 and Ala-126–Phe-129. His-159 (proton donor/acceptor) is an active-site residue. (S)-2,3,4,5-tetrahydrodipicolinate is bound at residue His-160. Lys-163 (proton donor) is an active-site residue. A (S)-2,3,4,5-tetrahydrodipicolinate-binding site is contributed by Gly-169 to Thr-170.

It belongs to the DapB family. As to quaternary structure, homotetramer.

The protein localises to the cytoplasm. It carries out the reaction (S)-2,3,4,5-tetrahydrodipicolinate + NAD(+) + H2O = (2S,4S)-4-hydroxy-2,3,4,5-tetrahydrodipicolinate + NADH + H(+). The catalysed reaction is (S)-2,3,4,5-tetrahydrodipicolinate + NADP(+) + H2O = (2S,4S)-4-hydroxy-2,3,4,5-tetrahydrodipicolinate + NADPH + H(+). The protein operates within amino-acid biosynthesis; L-lysine biosynthesis via DAP pathway; (S)-tetrahydrodipicolinate from L-aspartate: step 4/4. Functionally, catalyzes the conversion of 4-hydroxy-tetrahydrodipicolinate (HTPA) to tetrahydrodipicolinate. The protein is 4-hydroxy-tetrahydrodipicolinate reductase of Erwinia tasmaniensis (strain DSM 17950 / CFBP 7177 / CIP 109463 / NCPPB 4357 / Et1/99).